The primary structure comprises 410 residues: Elongation factor Tu (410 aa).

Positions Lys-10–Val-219 constitute a tr-type G domain. GTP contacts are provided by residues Gly-19–Thr-26, Asp-88–His-92, and Asn-143–Asp-146. A Mg(2+)-binding site is contributed by Thr-26.

This sequence belongs to the TRAFAC class translation factor GTPase superfamily. Classic translation factor GTPase family. EF-Tu/EF-1A subfamily. Monomer.

It is found in the cytoplasm. It catalyses the reaction GTP + H2O = GDP + phosphate + H(+). Its function is as follows. GTP hydrolase that promotes the GTP-dependent binding of aminoacyl-tRNA to the A-site of ribosomes during protein biosynthesis. This is Elongation factor Tu from Brachyspira hyodysenteriae (Treponema hyodysenteriae).